A 215-amino-acid chain; its full sequence is Ectodysplasin-A receptor-associated adapter protein (215 aa).

Disordered stretches follow at residues 1 to 41 and 62 to 86; these read MGLR…FNMS and LNCP…TGDP. Positions 17–28 are enriched in basic and acidic residues; that stretch reads GHQEDHMVKEPV. Residues 123–202 form the Death domain; that stretch reads DVIRIKLDPC…KVLRRWVDEE (80 aa).

Self-associates and binds EDAR, TRAF1, TRAF2 and TRAF3. In terms of tissue distribution, detected in adult pancreas, placenta and fetal skin, and at lower levels in lung, thymus, prostate and testis.

The protein resides in the cytoplasm. Adapter protein that interacts with EDAR DEATH domain and couples the receptor to EDA signaling pathway during morphogenesis of ectodermal organs. Mediates the activation of NF-kappa-B. The chain is Ectodysplasin-A receptor-associated adapter protein (EDARADD) from Homo sapiens (Human).